A 152-amino-acid polypeptide reads, in one-letter code: 17.1 kDa class II heat shock protein (152 aa).

One can recognise a sHSP domain in the interval 36 to 152 (DAKAMAATPA…KPKTIQVKVA (117 aa)).

It belongs to the small heat shock protein (HSP20) family.

The protein resides in the cytoplasm. The polypeptide is 17.1 kDa class II heat shock protein (HSP17.7) (Pisum sativum (Garden pea)).